Here is a 140-residue protein sequence, read N- to C-terminus: Nucleoside diphosphate kinase (140 aa).

The ATP site is built by Lys11, Phe59, Arg87, Thr93, Arg104, and Asn114. His117 functions as the Pros-phosphohistidine intermediate in the catalytic mechanism.

The protein belongs to the NDK family. Homotetramer. Mg(2+) is required as a cofactor.

It is found in the cytoplasm. It carries out the reaction a 2'-deoxyribonucleoside 5'-diphosphate + ATP = a 2'-deoxyribonucleoside 5'-triphosphate + ADP. The catalysed reaction is a ribonucleoside 5'-diphosphate + ATP = a ribonucleoside 5'-triphosphate + ADP. Major role in the synthesis of nucleoside triphosphates other than ATP. The ATP gamma phosphate is transferred to the NDP beta phosphate via a ping-pong mechanism, using a phosphorylated active-site intermediate. The polypeptide is Nucleoside diphosphate kinase (Beijerinckia indica subsp. indica (strain ATCC 9039 / DSM 1715 / NCIMB 8712)).